The primary structure comprises 148 residues: Large ribosomal subunit protein uL15 (148 aa).

Positions 1-30 (MPSRLRKTRKLRGHVSHGHGRIGKHRKHPG) are enriched in basic residues. A disordered region spans residues 1-37 (MPSRLRKTRKLRGHVSHGHGRIGKHRKHPGGRGNAGG). (3S)-3-hydroxyhistidine is present on histidine 39. Lysine 47 and lysine 55 each carry N6-acetyllysine. Residue serine 68 is modified to Phosphoserine. Lysine 110 is modified (N6-acetyllysine).

Belongs to the universal ribosomal protein uL15 family. Component of the large ribosomal subunit. Hydroxylated on His-39 by MINA.

The protein resides in the cytoplasm. Its function is as follows. Component of the large ribosomal subunit. The ribosome is a large ribonucleoprotein complex responsible for the synthesis of proteins in the cell. In Rattus norvegicus (Rat), this protein is Large ribosomal subunit protein uL15 (Rpl27a).